We begin with the raw amino-acid sequence, 144 residues long: Pleckstrin homology-like domain family A member 2 (144 aa).

The 94-residue stretch at 18–111 (ILCEGELEKR…AAITMALIDF (94 aa)) folds into the PH domain. Ser140 is modified (phosphoserine).

It belongs to the PHLDA2 family. Specifically expressed at high levels in extraembryonic tissues in the developing conceptus (at protein level). Expressed in placenta and yolc sac. Expressed at low levels in fetal liver and kidney.

The protein resides in the cytoplasm. It localises to the membrane. Its function is as follows. Plays a role in regulating placenta growth. May act via its PH domain that competes with other PH domain-containing proteins, thereby preventing their binding to membrane lipids. This is Pleckstrin homology-like domain family A member 2 (Phlda2) from Mus musculus (Mouse).